A 234-amino-acid polypeptide reads, in one-letter code: Ribosomal RNA small subunit methyltransferase G (234 aa).

Gly-85, Phe-90, and Arg-155 together coordinate S-adenosyl-L-methionine.

Belongs to the methyltransferase superfamily. RNA methyltransferase RsmG family.

The protein resides in the cytoplasm. The catalysed reaction is guanosine(527) in 16S rRNA + S-adenosyl-L-methionine = N(7)-methylguanosine(527) in 16S rRNA + S-adenosyl-L-homocysteine. Specifically methylates the N7 position of guanine in position 527 of 16S rRNA. The sequence is that of Ribosomal RNA small subunit methyltransferase G from Rhodopseudomonas palustris (strain BisB18).